We begin with the raw amino-acid sequence, 370 residues long: Probable trehalose-phosphate phosphatase 6 (370 aa).

The protein belongs to the trehalose phosphatase family. The cofactor is a divalent metal cation.

It carries out the reaction alpha,alpha-trehalose 6-phosphate + H2O = alpha,alpha-trehalose + phosphate. Its pathway is glycan biosynthesis; trehalose biosynthesis. In terms of biological role, removes the phosphate from trehalose 6-phosphate to produce free trehalose. Trehalose accumulation in plant may improve abiotic stress tolerance. The sequence is that of Probable trehalose-phosphate phosphatase 6 (TPP6) from Oryza sativa subsp. japonica (Rice).